A 263-amino-acid chain; its full sequence is Putative steroid dehydrogenase 4 (263 aa).

Residue Tyr154 is the Proton acceptor of the active site.

It belongs to the short-chain dehydrogenases/reductases (SDR) family. 17-beta-HSD 3 subfamily.

This Caenorhabditis elegans protein is Putative steroid dehydrogenase 4 (stdh-4).